Reading from the N-terminus, the 324-residue chain is Malate dehydrogenase (324 aa).

NAD(+)-binding positions include 21-26 (GAGRVG) and D45. Substrate contacts are provided by R94 and R100. Residues N107 and 130-132 (VTN) each bind NAD(+). Positions 132 and 163 each coordinate substrate. H187 functions as the Proton acceptor in the catalytic mechanism.

It belongs to the LDH/MDH superfamily. MDH type 3 family.

It catalyses the reaction (S)-malate + NAD(+) = oxaloacetate + NADH + H(+). Its function is as follows. Catalyzes the reversible oxidation of malate to oxaloacetate. The protein is Malate dehydrogenase of Trichormus variabilis (strain ATCC 29413 / PCC 7937) (Anabaena variabilis).